A 79-amino-acid chain; its full sequence is Cytochrome b (79 aa).

A run of 3 helical transmembrane segments spans residues 1–7, 31–52, and 67–79; these read SALFLAM, WLIR…YLHI, and WNIG…LTMA. Heme b-binding residues include His37 and His51.

It belongs to the cytochrome b family. In terms of assembly, the cytochrome bc1 complex contains 11 subunits: 3 respiratory subunits (MT-CYB, CYC1 and UQCRFS1), 2 core proteins (UQCRC1 and UQCRC2) and 6 low-molecular weight proteins (UQCRH/QCR6, UQCRB/QCR7, UQCRQ/QCR8, UQCR10/QCR9, UQCR11/QCR10 and a cleavage product of UQCRFS1). This cytochrome bc1 complex then forms a dimer. Heme b is required as a cofactor.

The protein resides in the mitochondrion inner membrane. Component of the ubiquinol-cytochrome c reductase complex (complex III or cytochrome b-c1 complex) that is part of the mitochondrial respiratory chain. The b-c1 complex mediates electron transfer from ubiquinol to cytochrome c. Contributes to the generation of a proton gradient across the mitochondrial membrane that is then used for ATP synthesis. This chain is Cytochrome b (MT-CYB), found in Dipodomys californicus (California kangaroo rat).